Reading from the N-terminus, the 825-residue chain is AP-3 complex subunit delta (825 aa).

HEAT repeat units lie at residues 131 to 168 (GLAR…QYPE), 169 to 205 (AISA…RAPK), 207 to 243 (YLEF…YEPR), 244 to 281 (LVKK…LVGH), 285 to 323 (DKLA…THPS), 324 to 360 (LVSA…KENI), 363 to 400 (IVKT…KSTY), 469 to 513 (EKRT…LAHR), 515 to 547 (LLQA…LWVE), and 548 to 584 (KIVS…IVNT). The segment at 787–825 (STNQGSMGDIVLETKSPIRVEKKKSKKKKKKKEKTSGKE) is disordered. The segment covering 807-819 (EKKKSKKKKKKKE) has biased composition (basic residues).

Belongs to the adaptor complexes large subunit family. As to quaternary structure, adaptor protein complex 3 (AP-3) is a heterotetramer composed of 2 large adaptins (apl5 and apl6), a medium adaptin (apm3) and a small adaptin (aps3).

The protein localises to the golgi apparatus. The protein resides in the cytoplasmic vesicle. It is found in the clathrin-coated vesicle membrane. Its function is as follows. Part of the AP-3 complex, an adaptor-related complex which is not clathrin-associated. The complex is associated with the Golgi region as well as more peripheral structures. It facilitates the budding of vesicles from the Golgi membrane and may be directly involved in trafficking to the vacuole. The protein is AP-3 complex subunit delta (apl5) of Schizosaccharomyces pombe (strain 972 / ATCC 24843) (Fission yeast).